We begin with the raw amino-acid sequence, 92 residues long: Large ribosomal subunit protein eL34 (92 aa).

It belongs to the eukaryotic ribosomal protein eL34 family.

The protein is Large ribosomal subunit protein eL34 of Staphylothermus marinus (strain ATCC 43588 / DSM 3639 / JCM 9404 / F1).